Here is a 336-residue protein sequence, read N- to C-terminus: HTH-type transcriptional repressor PurR (336 aa).

One can recognise an HTH lacI-type domain in the interval 2–56 (ATIKDVAKMAGVSTTTVSHVINKTRFVAKDTEEAVLSAIKQLNYSPSAVARSLKV). The H-T-H motif DNA-binding region spans 4–23 (IKDVAKMAGVSTTTVSHVIN). The DNA-binding element occupies 48 to 56 (SAVARSLKV). Residues tyrosine 73, lysine 188, threonine 190, phenylalanine 219, and aspartate 273 each coordinate hypoxanthine.

As to quaternary structure, homodimer.

It functions in the pathway purine metabolism; purine nucleotide biosynthesis [regulation]. In terms of biological role, is the main repressor of the genes involved in the de novo synthesis of purine nucleotides, regulating purB, purC, purEK, purF, purHD, purL, purMN and guaBA expression. PurR is allosterically activated to bind its cognate DNA by binding the purine corepressors, hypoxanthine or guanine, thereby effecting transcription repression. In Haemophilus influenzae (strain ATCC 51907 / DSM 11121 / KW20 / Rd), this protein is HTH-type transcriptional repressor PurR.